The primary structure comprises 154 residues: Myoglobin (154 aa).

The Globin domain occupies 2-148; that stretch reads GLSDGEWQLV…FRKDIAAKYK (147 aa). Serine 4 carries the post-translational modification Phosphoserine. Histidine 65 contributes to the nitrite binding site. Histidine 65 contacts O2. Threonine 68 is subject to Phosphothreonine. Histidine 94 serves as a coordination point for heme b.

The protein belongs to the globin family. In terms of assembly, monomeric.

It localises to the cytoplasm. The protein resides in the sarcoplasm. It carries out the reaction Fe(III)-heme b-[protein] + nitric oxide + H2O = Fe(II)-heme b-[protein] + nitrite + 2 H(+). The catalysed reaction is H2O2 + AH2 = A + 2 H2O. Its function is as follows. Monomeric heme protein which primary function is to store oxygen and facilitate its diffusion within muscle tissues. Reversibly binds oxygen through a pentacoordinated heme iron and enables its timely and efficient release as needed during periods of heightened demand. Depending on the oxidative conditions of tissues and cells, and in addition to its ability to bind oxygen, it also has a nitrite reductase activity whereby it regulates the production of bioactive nitric oxide. Under stress conditions, like hypoxia and anoxia, it also protects cells against reactive oxygen species thanks to its pseudoperoxidase activity. The sequence is that of Myoglobin (MB) from Orcinus orca (Killer whale).